We begin with the raw amino-acid sequence, 432 residues long: Thiol-specific monooxygenase (432 aa).

FAD contacts are provided by residues 13–17 (GGGPG) and 46–47 (VW). 65–66 (TN) is an NADP(+) binding site. 117-118 (EV) contributes to the FAD binding site. An NADP(+)-binding site is contributed by 199–202 (SGQD).

This sequence belongs to the FMO family. Monomer. FAD is required as a cofactor.

In terms of biological role, flavin-dependent oxidation of thiol-containing compounds. Probably required for the correct folding of disulfide-bonded proteins. The protein is Thiol-specific monooxygenase (FMO1) of Saccharomyces cerevisiae (strain ATCC 204508 / S288c) (Baker's yeast).